We begin with the raw amino-acid sequence, 654 residues long: NADH-ubiquinone oxidoreductase chain 5 (654 aa).

16 consecutive transmembrane segments (helical) span residues 1–21, 30–50, 76–96, 113–133, 135–155, 178–198, 200–220, 241–261, 274–294, 301–320, 324–346, 365–385, 406–426, 451–471, 510–530, and 612–632; these read MYLA…FLGR, LITC…FYEV, FIYD…SALV, FFAY…GDNY, VMFI…NFWF, FSIG…TTVF, LAPF…LVAA, TPVS…YLLL, LILI…TGLL, VIAY…CGLS, VALF…AGSV, LLPF…ALPF, SGNL…MYSI, PLIM…FGYV, FLPL…YWIF, and TYAM…FFIG.

This sequence belongs to the complex I subunit 5 family.

It is found in the mitochondrion inner membrane. The catalysed reaction is a ubiquinone + NADH + 5 H(+)(in) = a ubiquinol + NAD(+) + 4 H(+)(out). Core subunit of the mitochondrial membrane respiratory chain NADH dehydrogenase (Complex I) that is believed to belong to the minimal assembly required for catalysis. Complex I functions in the transfer of electrons from NADH to the respiratory chain. The immediate electron acceptor for the enzyme is believed to be ubiquinone. The chain is NADH-ubiquinone oxidoreductase chain 5 (ND5) from Rhizopus stolonifer (Rhizopus nigricans).